Consider the following 652-residue polypeptide: DNA ligase (652 aa).

NAD(+) is bound by residues 29–33 (DSEYD), 78–79 (SL), and E107. Residue K109 is the N6-AMP-lysine intermediate of the active site. NAD(+)-binding residues include R130, E164, K278, and K302. Positions 395, 398, 413, and 418 each coordinate Zn(2+). One can recognise a BRCT domain in the interval 577-652 (VADAALSGLT…VRDEAWLESL (76 aa)).

This sequence belongs to the NAD-dependent DNA ligase family. LigA subfamily. Mg(2+) is required as a cofactor. Requires Mn(2+) as cofactor.

It catalyses the reaction NAD(+) + (deoxyribonucleotide)n-3'-hydroxyl + 5'-phospho-(deoxyribonucleotide)m = (deoxyribonucleotide)n+m + AMP + beta-nicotinamide D-nucleotide.. Its function is as follows. DNA ligase that catalyzes the formation of phosphodiester linkages between 5'-phosphoryl and 3'-hydroxyl groups in double-stranded DNA using NAD as a coenzyme and as the energy source for the reaction. It is essential for DNA replication and repair of damaged DNA. This Streptococcus pneumoniae (strain 70585) protein is DNA ligase.